We begin with the raw amino-acid sequence, 581 residues long: MSLPMNSLYSLTWGDYGTSLVSAIQLLRCHGDLVDCTLAAGGRSFPAHKIVLCAASPFLLDLLKNTPCKHPVVMLAGVNANDLEALLEFVYRGEVSVDHAQLPSLLQAAQCLNIQGLAPQTVTKDDYTTHSIQLQHMIPQHHDQDQLIATIATAPQQTVHAQVVEDIHHQGQILQATTQTNAAGQQQTIVTTDAAKHDQAVIQAFLPARKRKPRVKKMSPTAPKISKVEGMDTIMGTPTSSHGSGSVQQVLGENGAEGQLLSSTPIIKSEGQKVETIVTMDPNNMIPVTSANAATGEITPAQGATGSSGGNTSGVLSTPKAKRAKHPPGTEKPRSRSQSEQPATCPICYAVIRQSRNLRRHLELRHFAKPGVKKEKKTTSGKKSSSGSSGSGSGALSSSGSVPQVQTVQSLHTLQGVQVKKDPDAQQQQQQQQQQQQQQQQAMTVSGATGGQVQQQVQQVQQQVQQQQQQQQQQQQQLQHHQIIDSSGNITTATTSAQAAAAAQQQAAGQQQQLVAQSDGSESGAPLSIAQVQTLQGHQIIGNLNQVNMTDFQQQQPQQQQQQQQQQQQQQQQQQQTQQTL.

One can recognise a BTB domain in the interval 34-99 (VDCTLAAGGR…VYRGEVSVDH (66 aa)). The interval 201-397 (VIQAFLPARK…SSGSGSGALS (197 aa)) is interaction with E(bx). Residue T237 is modified to Phosphothreonine. Disordered regions lie at residues 298-343 (ITPA…EQPA) and 364-404 (LRHF…SVPQ). The C2H2-type; degenerate zinc-finger motif lies at 343 to 366 (ATCPICYAVIRQSRNLRRHLELRH). Residues 381 to 401 (GKKSSSGSSGSGSGALSSSGS) are compositionally biased toward low complexity.

Interacts with Bin1, lolal, corto, ttk and ph-p. Interacts with FACT subunits Ssrp and dre4/SPT16. Interacts with E(bx). Upon ecdysone stimulation, interacts with Nup98. Post-translationally, the N-terminus is blocked. In terms of tissue distribution, expressed in the central nervous system throughout development.

Its subcellular location is the nucleus. It localises to the chromosome. In terms of biological role, transcriptional activator that functions by regulating chromatin structure. Overcomes the repressive effects of chromatin by promoting the open chromatin conformation in promoter gene regions, thereby allowing access to other transcription factors. Binds to DNA Polycomb response elements (PREs) at the bithorax complex and to the proximal region of the engrailed promoter, and positively regulates transcription of many genes including homeotic ones. Involved in zygotic genome activation (ZGA), a critical event in early embryonic development during which the developmental control passes from maternally provided mRNAs to the expression of the zygotic genome after fertilization. Binds to the DNA sequence (GA)n, with optimal binding to the pentamer 5'-GAGAG-3'. Binds DNA as an oligomer. May also act as a transcriptional repressor, maintaining the repressed state of genes including lolal, and down-regulating its own transcription. Required for dosage compensation in males and may be involved in oogenesis. Also has a role in nuclear division. In Drosophila melanogaster (Fruit fly), this protein is Transcription activator GAGA (Trl).